The following is a 671-amino-acid chain: cGMP-dependent protein kinase 1 (671 aa).

Position 2 is an N-acetylserine (Ser2). The stretch at 2–59 (SELEEDFAKILMLKEERIKELEKRLSEKEEEIQELKRKLHKCQSVLPVPSTHIGPRTT) forms a coiled coil. Positions 2–102 (SELEEDFAKI…LIKEAILDND (101 aa)) are required for dimerization. The leucine-zipper stretch occupies residues 9-44 (AKILMLKEERIKELEKRLSEKEEEIQELKRKLHKCQ). An autoinhibitory domain region spans residues 50–75 (PSTHIGPRTTRAQGISAEPQTYRSFH). At Thr59 the chain carries Phosphothreonine; by autocatalysis. Positions 103–220 (FMKNLELSQI…EYMEFLKSVP (118 aa)) are cGMP-binding, high affinity. 3',5'-cyclic AMP contacts are provided by residues 167–170 (GELA) and 177–178 (RT). Residues 167–170 (GELA), 177–178 (RT), Arg282, 291–294 (GEKA), 301–302 (RT), and Tyr336 each bind 3',5'-cyclic GMP. The interval 221–341 (TFQSLPEEIL…SNKAYEDAEA (121 aa)) is cGMP-binding, low affinity. The Protein kinase domain occupies 360 to 619 (FNIIDTLGVG…VKDIQKHKWF (260 aa)). Residues 366–374 (LGVGGFGRV) and Lys390 contribute to the ATP site. The active-site Proton acceptor is the Asp484. Residue Thr515 is modified to Phosphothreonine. One can recognise an AGC-kinase C-terminal domain in the interval 620-671 (EGFNWEGLRKGTLTPPIIPSVASPTDTSNFDSFPEDNDEPPPDDNSGWDIDF). Residues 635–671 (PIIPSVASPTDTSNFDSFPEDNDEPPPDDNSGWDIDF) are disordered. Residues 652-661 (FPEDNDEPPP) are compositionally biased toward acidic residues.

Belongs to the protein kinase superfamily. AGC Ser/Thr protein kinase family. cGMP subfamily. In terms of assembly, isoform alpha: parallel homodimer or heterodimer and also heterotetramer. Interacts directly with PPP1R12A. Non-covalent dimer of dimer of PRKG1-PRKG1 and PPP1R12A-PPP1R12A. This interaction targets PRKG1 to stress fibers to mediate smooth muscle cell relaxation and vasodilation in responses to rises in cGMP. Isoform beta: antiparallel homodimer. Part of cGMP kinase signaling complex at least composed of ACTA2/alpha-actin, CNN1/calponin H1, PLN/phospholamban, PRKG1 and ITPR1. Interacts with IRAG1. Forms a stable complex with ITPR1, IRAG1, and isoform beta of PRKG1. Interacts with TRPC7 (via ankyrin repeat domain). Isoform alpha interacts with RGS2. Interacts with GTF2I. Post-translationally, autophosphorylation increases kinase activity. In terms of processing, 65 kDa monomer is produced by proteolytic cleavage. High concentrations are detected in various smooth muscle: lung, rumen, trachea, aorta, uterus and stomach. Isoform alpha is expressed predominantly in heart, cerebellum and lung, whereas the beta isoform is expressed in high concentrations in trachea, aorta, stomach and uterus.

It is found in the cytoplasm. It carries out the reaction L-seryl-[protein] + ATP = O-phospho-L-seryl-[protein] + ADP + H(+). It catalyses the reaction L-threonyl-[protein] + ATP = O-phospho-L-threonyl-[protein] + ADP + H(+). With respect to regulation, in the absence of cGMP, PRKG1 activity is suppressed by autoinhibitory contacts. Serine/threonine protein kinase that acts as a key mediator of the nitric oxide (NO)/cGMP signaling pathway. GMP binding activates PRKG1, which phosphorylates serines and threonines on many cellular proteins. Numerous protein targets for PRKG1 phosphorylation are implicated in modulating cellular calcium, but the contribution of each of these targets may vary substantially among cell types. Proteins that are phosphorylated by PRKG1 regulate platelet activation and adhesion, smooth muscle contraction, cardiac function, gene expression, feedback of the NO-signaling pathway, and other processes involved in several aspects of the CNS like axon guidance, hippocampal and cerebellar learning, circadian rhythm and nociception. Smooth muscle relaxation is mediated through lowering of intracellular free calcium, by desensitization of contractile proteins to calcium, and by decrease in the contractile state of smooth muscle or in platelet activation. Regulates intracellular calcium levels via several pathways: phosphorylates IRAG1 and inhibits IP3-induced Ca(2+) release from intracellular stores, phosphorylation of KCNMA1 (BKCa) channels decreases intracellular Ca(2+) levels, which leads to increased opening of this channel. PRKG1 phosphorylates the canonical transient receptor potential channel (TRPC) family which inactivates the associated inward calcium current. Another mode of action of NO/cGMP/PKGI signaling involves PKGI-mediated inactivation of the Ras homolog gene family member A (RhoA). Phosphorylation of RHOA by PRKG1 blocks the action of this protein in myriad processes: regulation of RHOA translocation; decreasing contraction; controlling vesicle trafficking, reduction of myosin light chain phosphorylation resulting in vasorelaxation. Activation of PRKG1 by NO signaling also alters gene expression in a number of tissues. In smooth muscle cells, increased cGMP and PRKG1 activity influence expression of smooth muscle-specific contractile proteins, levels of proteins in the NO/cGMP signaling pathway, down-regulation of the matrix proteins osteopontin and thrombospondin-1 to limit smooth muscle cell migration and phenotype. Regulates vasodilator-stimulated phosphoprotein (VASP) functions in platelets and smooth muscle. The polypeptide is cGMP-dependent protein kinase 1 (PRKG1) (Bos taurus (Bovine)).